The following is a 532-amino-acid chain: FRIGIDA-like protein 4b (532 aa).

Belongs to the Frigida family. As to expression, expressed in leaves, shoot apex, flowers and during seed development.

The chain is FRIGIDA-like protein 4b (FRL4B) from Arabidopsis thaliana (Mouse-ear cress).